The primary structure comprises 229 residues: Uracil-DNA glycosylase (229 aa).

D64 functions as the Proton acceptor in the catalytic mechanism.

It belongs to the uracil-DNA glycosylase (UDG) superfamily. UNG family.

It is found in the cytoplasm. It carries out the reaction Hydrolyzes single-stranded DNA or mismatched double-stranded DNA and polynucleotides, releasing free uracil.. In terms of biological role, excises uracil residues from the DNA which can arise as a result of misincorporation of dUMP residues by DNA polymerase or due to deamination of cytosine. This chain is Uracil-DNA glycosylase, found in Shigella flexneri serotype 5b (strain 8401).